The primary structure comprises 335 residues: Homeobox protein DBX1 (335 aa).

Disordered stretches follow at residues 56–102 (RSIP…LSPA) and 240–335 (KERE…ITVS). Over residues 83–95 (GSPGSGSRRGSSP) the composition is skewed to low complexity. Residues 181-240 (GMLRRAVFSDVQRKALEKTFQKQKYISKPDRKKLASKLGLKDSQVKIWFQNRRMKWRNSK) constitute a DNA-binding region (homeobox). Over residues 299–317 (GPLPASPAHSSSPGKPSDF) the composition is skewed to low complexity. Residues 318 to 335 (SDSDEDEEGEEDEEITVS) show a composition bias toward acidic residues.

This sequence belongs to the H2.0 homeobox family.

The protein resides in the nucleus. In terms of biological role, could have a role in patterning the central nervous system during embryogenesis. Has a key role in regulating the distinct phenotypic features that distinguish two major classes of ventral interneurons, V0 and V1 neurons. Regulates the transcription factor profile, neurotransmitter phenotype, intraspinal migratory path and axonal trajectory of V0 neurons, features that differentiate them from an adjacent set of V1 neurons. This Rattus norvegicus (Rat) protein is Homeobox protein DBX1 (Dbx1).